Here is a 591-residue protein sequence, read N- to C-terminus: Monoterpene synthase 8, chloroplastic (591 aa).

Residues 1-46 constitute a chloroplast transit peptide; that stretch reads MSLLLAPPSYFPFRGLRRSTAAKQPPCLRLVKCTADRQSPEAARRS. The Mg(2+) site is built by aspartate 346, aspartate 350, and glutamate 497. Residues 346-350 carry the DDXXD motif motif; the sequence is DDVYD.

Belongs to the terpene synthase family. Tpsa subfamily. Mg(2+) serves as cofactor. Requires Mn(2+) as cofactor. Highly expressed in flowers, petals and sepals, but almost undetectable in vegetative organs.

The protein resides in the plastid. Its subcellular location is the chloroplast. It carries out the reaction (2E)-geranyl diphosphate + H2O = (R)-linalool + diphosphate. The catalysed reaction is (2E)-geranyl diphosphate + H2O = (S)-linalool + diphosphate. The enzyme catalyses (2E,6E)-farnesyl diphosphate = (S)-beta-bisabolene + diphosphate. It catalyses the reaction (2E,6E)-farnesyl diphosphate = (E,R)-alpha-bisabolene + diphosphate. It carries out the reaction (2E,6E)-farnesyl diphosphate = (E)-beta-farnesene + diphosphate. The catalysed reaction is (2E,6E)-farnesyl diphosphate = beta-sesquiphellandrene + diphosphate. The enzyme catalyses (2E,6E)-farnesyl diphosphate = (1S,5S,6R)-alpha-bergamotene + diphosphate. It participates in secondary metabolite biosynthesis; terpenoid biosynthesis. Its function is as follows. Sesquiterpene and monoterpene synthase involved in the biosynthesis of volatile compounds present in floral scent. Mediates the conversion of (2E)-geranyl diphosphate (GPP) into linalool, with trace levels of myrcene, limonene and (Z)-beta-ocimene. Also acts as a sesquiterpene synthase by catalyzing the conversion of farnesyl diphosphate (FPP) to alpha-bergamotene and beta-bisabolene and to minor products including alpha-curcumene, cis-alpha-bisabolene, beta-farnesene and beta-sesquiphellandrene, as well as seven other unidentified sesquiterpenes. The sequence is that of Monoterpene synthase 8, chloroplastic from Hedychium coronarium (White butterfly ginger-lily).